We begin with the raw amino-acid sequence, 432 residues long: Phosphomevalonate kinase (432 aa).

Residues Lys10 and 142-148 (VEKTGLG) contribute to the ATP site.

It belongs to the GHMP kinase family. Mevalonate kinase subfamily.

It localises to the cytoplasm. It catalyses the reaction (R)-5-phosphomevalonate + ATP = (R)-5-diphosphomevalonate + ADP. The protein operates within isoprenoid biosynthesis; isopentenyl diphosphate biosynthesis via mevalonate pathway; isopentenyl diphosphate from (R)-mevalonate: step 2/3. Its function is as follows. Phosphomevalonate kinase; part of the second module of ergosterol biosynthesis pathway that includes the middle steps of the pathway. ERG8 converts 5-phosphomevalonate to 5-diphosphomevalonate. The second module is carried out in the vacuole and involves the formation of farnesyl diphosphate, which is also an important intermediate in the biosynthesis of ubiquinone, dolichol, heme and prenylated proteins. Activity by the mevalonate kinase ERG12 first converts mevalonate into 5-phosphomevalonate. 5-phosphomevalonate is then further converted to 5-diphosphomevalonate by the phosphomevalonate kinase ERG8. The diphosphomevalonate decarboxylase MVD then produces isopentenyl diphosphate. The isopentenyl-diphosphate delta-isomerase IDI1 then catalyzes the 1,3-allylic rearrangement of the homoallylic substrate isopentenyl (IPP) to its highly electrophilic allylic isomer, dimethylallyl diphosphate (DMAPP). Finally the farnesyl diphosphate synthase ERG20 catalyzes the sequential condensation of isopentenyl pyrophosphate with dimethylallyl pyrophosphate, and then with the resultant geranylpyrophosphate to the ultimate product farnesyl pyrophosphate. This chain is Phosphomevalonate kinase, found in Candida albicans (strain SC5314 / ATCC MYA-2876) (Yeast).